The sequence spans 481 residues: Beta-amyrin 28-monooxygenase (481 aa).

The chain crosses the membrane as a helical span at residues 4-24 (FYVPLLSLFVLFISLSFHFLF). Position 428 (Cys428) interacts with heme.

This sequence belongs to the cytochrome P450 family. Heme serves as cofactor. In terms of tissue distribution, mostly expressed in roots, and, to a lower extent, in stems and leaves. Accumulates only in the rhizome of plants.

Its subcellular location is the membrane. It carries out the reaction beta-amyrin + 3 reduced [NADPH--hemoprotein reductase] + 3 O2 = oleanolate + 3 oxidized [NADPH--hemoprotein reductase] + 4 H2O + 4 H(+). It functions in the pathway secondary metabolite biosynthesis; terpenoid biosynthesis. Component of the oleanane-type triterpene saponins (e.g. ginsenosides or panaxosides) biosynthetic pathway. Catalyzes the carboxylation of beta-amyrin at the C-28 position to form oleanolic acid during ginsenoside biosynthesis, a class of tetracyclic triterpenoid saponins. This is Beta-amyrin 28-monooxygenase from Panax ginseng (Korean ginseng).